Reading from the N-terminus, the 552-residue chain is Sensor histidine kinase DpiB (552 aa).

Over 1-21 (MLQLNENKQFAFFQRLAFPLR) the chain is Cytoplasmic. The helical transmembrane segment at 22–42 (IFLLILVFSIFVIAALAQYFT) threads the bilayer. Residues 43 to 182 (ASFEDYLTLH…DSWRAEFLLP (140 aa)) lie on the Periplasmic side of the membrane. Residues 183-203 (MAGVFVVLLGILMLLSWFLAA) traverse the membrane as a helical segment. The Cytoplasmic portion of the chain corresponds to 204–552 (HIRRQMMGME…NDSSINPIDR (349 aa)). Residues 222 to 292 (RQQEALFSSV…IDEKRQDVVA (71 aa)) enclose the PAS domain. The Histidine kinase domain occupies 344–541 (TLRHEHLNWM…LFSIYIPKVK (198 aa)). A Phosphohistidine; by autocatalysis modification is found at H347.

In terms of processing, autophosphorylated.

It localises to the cell inner membrane. The catalysed reaction is ATP + protein L-histidine = ADP + protein N-phospho-L-histidine.. With respect to regulation, autophosphorylation is induced in vitro by dithiothreitol (DTT). In terms of biological role, member of the two-component regulatory system DpiA/DpiB, which is essential for expression of citrate-specific fermentation genes and genes involved in plasmid inheritance. Could be involved in response to both the presence of citrate and external redox conditions. Functions as a sensor kinase that phosphorylates DpiA in the presence of citrate. The chain is Sensor histidine kinase DpiB (dpiB) from Escherichia coli (strain K12).